Here is a 60-residue protein sequence, read N- to C-terminus: MNRLTTIILMLIVINVIMDDISESKVAAGIVCKVCKIICGMQGKKVNICKAPIKCKCKKG.

The first 28 residues, 1–28, serve as a signal peptide directing secretion; that stretch reads MNRLTTIILMLIVINVIMDDISESKVAA. 3 disulfides stabilise this stretch: Cys32–Cys49, Cys35–Cys55, and Cys39–Cys57. Lys59 bears the Lysine amide mark.

In terms of tissue distribution, expressed by the venom gland.

The protein localises to the secreted. Its function is as follows. Inhibits potassium channels. This chain is Putative potassium channel blocker TXKS1, found in Olivierus martensii (Manchurian scorpion).